Consider the following 545-residue polypeptide: Methionine--tRNA ligase (545 aa).

A 'HIGH' region motif is present at residues 13–23 (PYANGPLHIGH). Residues cysteine 144, cysteine 147, cysteine 157, and cysteine 160 each coordinate Zn(2+). The short motif at 330-334 (KISKS) is the 'KMSKS' region element. Lysine 333 is an ATP binding site.

The protein belongs to the class-I aminoacyl-tRNA synthetase family. MetG type 1 subfamily. As to quaternary structure, monomer. Zn(2+) is required as a cofactor.

The protein resides in the cytoplasm. The enzyme catalyses tRNA(Met) + L-methionine + ATP = L-methionyl-tRNA(Met) + AMP + diphosphate. Is required not only for elongation of protein synthesis but also for the initiation of all mRNA translation through initiator tRNA(fMet) aminoacylation. The sequence is that of Methionine--tRNA ligase from Blochmanniella floridana.